Here is a 540-residue protein sequence, read N- to C-terminus: Glucose-6-phosphate isomerase (540 aa).

The Proton donor role is filled by Glu-346. Residues His-377 and Lys-505 contribute to the active site.

This sequence belongs to the GPI family.

It is found in the cytoplasm. The catalysed reaction is alpha-D-glucose 6-phosphate = beta-D-fructose 6-phosphate. Its pathway is carbohydrate biosynthesis; gluconeogenesis. It functions in the pathway carbohydrate degradation; glycolysis; D-glyceraldehyde 3-phosphate and glycerone phosphate from D-glucose: step 2/4. Functionally, catalyzes the reversible isomerization of glucose-6-phosphate to fructose-6-phosphate. This is Glucose-6-phosphate isomerase from Francisella tularensis subsp. tularensis (strain WY96-3418).